We begin with the raw amino-acid sequence, 99 residues long: Small ribosomal subunit protein bS20 (99 aa).

Over residues 1–20 (MASAKPKKKNPRLASGRKRA) the composition is skewed to basic residues. Positions 1-29 (MASAKPKKKNPRLASGRKRARQDVKLNAA) are disordered.

It belongs to the bacterial ribosomal protein bS20 family.

Its function is as follows. Binds directly to 16S ribosomal RNA. The polypeptide is Small ribosomal subunit protein bS20 (Paracidovorax citrulli (strain AAC00-1) (Acidovorax citrulli)).